A 4034-amino-acid polypeptide reads, in one-letter code: MRDEMWNTATEPIAIIGSGCKFPGGSTTPSKLWELLKDPKDIVSEIRPDRFDVDKYFHPDHKHHGTSNVRHSYFLEENFKHFDAKFFGIRPQEAMAMDPQQRFLLETVYESLEAAGITISDLKGSQAGVFVGNMGVDYSELLSQDIDAFPTYFAPGTARSILSNRISYFFDLHGPSVTVDTACSSSLVAVHQAVQSLRLGETPVAIVCGANLLLGPAQYIAESKLQMLSPNGRSRMWDASADGYARGEGFASIVLKPLSVALANGDHIECIIRETGCNQDGRTKGITMPSPLAQCKLIQETYKRAGLDLSKSSDRPQYFEAHGTGTPAGDPVEAEAISTAFFGPESGFRRTSHDPKLYVGSVKTVIGHTEGTAGLAGLIKASLAMKAKSIPPNLHLERVNPAVQPFYGNLEIPTRLMDWPEPAPGQPLRASVNSFGFGGANAHVILESYTPAAEVAMVTPTAAAGPVFSPFVFSASSDKALASMLSAYSDYLSLNPTVDLRSVAYTLSQHRSVFDKRAAISAPDLDTLKTKLKARSEEASPSGKTAAVQSLERRPRYLGVFTGQGAQWARMGVDVINASPAARAIFEDLEQSLKTLPEEDRPSWSMLEELLAPPETSRVYQANISQTVCTAVQVMMVQLLRAAGIEFSCVVGHSSGEMAAAYTAGYLSARDAVRAAYFRGVHSQLAKGSNGQPGGMIAVGTNFEDAEELCELDDFKGRLCVAASNSAELVTLSGDLDAVQEVKKILDAEEKFNKQLQVDKGYHSHHMLPCSEPYVASLQKCGIQAQVPGDATACRWISSVYVDDMTNLDCRVQDRYWIENLAKPVMFSQALSHALGGDDKFDSVIEVGPHPALKGPASQTIQACLGERLPYFGCLSRGTDSNEAFAEFLGGVWSTFGSSAVDLAAYERFATGGCDQRLVKGLPSYTWDHDVEHYFQSRLSKVVLHRSTPPNELLGTRLPDDTAGEVRWRNSLHPGELPWLLQHSAQGQTVFPGTGYIATTLEAVKQLFDSSGVQTVEIRDMVIGNALVIEANTGVETLFSLTFINTQTDRITAHFSFCSQQGGSTKLVENASGDLVVLLGEPSEDALPRSFHPGTQMKDIDEERFYEAIDKLGYGYEGPFRALSQLQRRMGAATGLVAIPEKTKHFDQMVLHPAALDAMVQTVLLAYCYPGDTRLQGISLPTGIDCIRFNYGMLSEAARPGCQLPFLSCTAFEGDDVLGGVGGDVGGDVDVFSEDKRFALIQLQGLHTKPLSPPSAATDLQIFSEMEWKTASPEGADMEVRGEKRAYVADLYSSMERVAYFYMRHVDREIGKDRSGLAPHQVRFLEWVDHMCGRVEAGTLPHISRKWDHDTRQDILKIIAKYPDSIDLELMHAVGENLCSVFRGEMNALEPMVKKNMLNRFYSDALGMSPYTEDLARMVGHITHRYPHMNILEVGAGTGGATKVMLRRLQDAFASYTYTDISSGFFADARQVFKAHESKMLFKTLDIEKDIVDQGYEENSFDLVIANLVVHATADLDATMGRLRRLVKPGGHLVLLEITTNDPLRFGFIFGPLPGWWLGGEDGRVHSPCVDVEWWDRVMKRNGFSGADIVTPHHTLGPLSVIMTQAVDHRVQLLRQPTSADFGDFTIDPERLTIVGGVKPLAEGLEQLLKPRYQSVAWIPTLEEVSSHSLPVMGSVLSLVELDEPLFKDMTAQTLEGFKFVFQQSRSVYWITCGASGANPYSNMAAGVARTVALEMRHLRLGFLDFEDAKDATVQRLADRFLEFEILGTLEQQGKLDHLTWYQEPELRFDGKNLLVPRMKLSKDRNGRYNSRRRQLTKNVNPREVPVSLVPTTSGKDFVLKESLSSSSTKHGAQDTVSLRVHYASQRSLRLESSDYLFLVLGTNLSSGEAMFALADSNRSIVHVDRQWTTSYLGNLDHGRHALADLYTQIMASTVVAGLSAGDSLVVLDAETPLSQALSARCAAKGVRLTLLSTTTATSHSEADGTNKTNVRIHPLESRRSIESKLPSNATCFLDLSTNNGSEAAAVINSYIPAQCRVETRDTLTATACQVTRSTSTGGLGPAVGDVLPACWANVEAAGRDLSFFSAAVVTPTELTAAAGNGKTSAPRVGDDALLLITDWTAEAEVGVLVQPADSMVRFRQDKTYWLVGLTGGLALSLCRWMVNRGARYVVMTSRNPKIDKEWLQGVESCGATVKIFSNDVTDRAAVNSAYRTISATLPPIAGVVQGAMVLRDTMFAETTMETIESILGPKVRGSIYLDEIFYSTPLDFFVFLSSVTATSGNPGQSIYAGANMFMNSLAAQRRKRGVAGSSVEIGCIMGNGSVTTILSYEHQKYLFSVGNTWLAEQDFLTMFGEAVLASPPDAPDSVTSVTGLRLQFNDDKPDITWFSNPIFQHLVLQSGNAMQTSLSVARQGTPVKSLLQEAKSSEEVLDILKDAFTAKLVSSLQADPDSNLLEVDLETLGMDSLVAVDLRSWFLAELSVDVPVLKILNGSTARLLLEFVQGLIPASMTPKLDGSDGADAAAQEAPPVAPPVTKPKPDVSVKVPPPHQPVASLKPSGPASPTSPSSATASPGRSRSVASPVTADTPVSPTTSASMASLNDSRKLIRTVPVSFGQSRFWFLGSYNPDPLAFNITSLMRISGPLRTNDFGKAVDKVLNHHEALRTSFVSENDAPVQKIWSSPAFALEQRKIADDESEVVKAYTEVQNTRYNLEAGQTMRIMLLTKSPTKHVLVLGYHHINMDGVSFEVLFSDIEKAYNRTPLDRSVMQFPDFTIREAGEYKSGAWRSELQYWQSKFTSLPEPTPLLSVSKRRTRPVNLSYTTHSVSRRINAEQSQAIHTVGRKFKATPFHFYLSVFKTLIARFSGADDFCIGIADANRKEDKVMGAVGLYLNLLPLRVRSALGQTFGETLADMKKVSQEAFANSKVPFDVLLNELSVPRSSSQTPLFQTFVNYRRGVSEERSFCGCTGAGELISGGQIGYDISLDIVENPGGDALVTLSVQKDLYNVDMANLLLDSYFRLVDSFAKNPATSLNRPAIYDPVAVDKALTLGCGPTLEDSSWPETLIHRIENMSVKYATKFALRNGQNGGLTYSQMIARINDIAAKLIDAKVGTGIVGVMQASTMDFICSILAVWKAGAIYTPLDPRLNSTDRLKAVVDECQPACILVDATTKPLFDSLATNAVQIDVSMVQSSKTLEASPKVAIHAKAPSAAAVFYTSGSTGVPKGITLSHASLTYNIMAATRQFGFKEGVDIMLQQSSFSFDMALAQMLTSLSNGGTLVVVPSHLRGDALGLSQLIVAENVSIVQASPTEYKSLIGVNAQHLKTSKWRVALSGGENMTQSLLEVFRSLGKPDLVLFNGYGPTEATINANTRIVPYHEPNSNPDLPLLTWPNYSISIVDLELNPVPVGVFGEVCIGGAGVGLGYFKNDELTAKAFVADKTAPAEFVAKGWKTKFRTGDLGRLSPDGGLIIEGRIDGDTQVKLRGMRIDLKNIESAILQAGAGKIIDAAVSVRRGGADESEPQYLVGHVVLDADQTPEDSQQDFLAQLIPRLRLPRHMKPSLLVPIRALPQTASHKLDRRALQQLPISDAGQIAKQSQQGAELGSDQARMWKLWKQVIPRDVVSQYSITPQSDFFHVGGTSLLLVNLQSLIAREHGRAPPLHAMFESSTVAAMTDLVLSDDASGSTALIDWEQETSIPTLPPHIIPGGAGNKVSVPPRVVLLTGATGFLGRQLMAFLLRQPSVKRIHCLAVRGGAPPSSAAPFSDPRVSIHAGDLNAPHLGLGEAVAELLFAQADVIIHNGADVSFLKTYATLRATNVGSTRELARLAAPRRIPFHFVSSASITQLTGLDEFGEASMAAWAPPADPRGMSGGYAAAKWASEVLLEKAARAWGLPVVIHRPSSITGEGTNSLDLMGNMFKYIEQLEAVPESDSWKGNFDFVSVENVAADIVQAVVAANVVAAGGVKFIYEAGDIVYPLSMVKDMSEGGAKLPVKTMPLAKWVEKAAEKGLDSMLAEYLIKAASTGTSLAFPRLLKDGN.

A Ketosynthase family 3 (KS3) domain is found at 10–448 (TEPIAIIGSG…GANAHVILES (439 aa)). Catalysis depends on for beta-ketoacyl synthase activity residues Cys183, His322, and His368. Residues 560–879 (VFTGQGAQWA…PYFGCLSRGT (320 aa)) are acyl transferase. Residues 951 to 1082 (NELLGTRLPD…GDLVVLLGEP (132 aa)) form an N-terminal hotdog fold region. In terms of domain architecture, PKS/mFAS DH spans 951 to 1257 (NELLGTRLPD…TKPLSPPSAA (307 aa)). The interval 952 to 1252 (ELLGTRLPDD…LQGLHTKPLS (301 aa)) is dehydratase (DH) domain. Residue His983 is the Proton acceptor; for dehydratase activity of the active site. The tract at residues 1097-1257 (MKDIDEERFY…TKPLSPPSAA (161 aa)) is C-terminal hotdog fold. The Proton donor; for dehydratase activity role is filled by Asp1157. Residues 1396-1594 (NMLNRFYSDA…SGADIVTPHH (199 aa)) are methyltransferase (MT) domain. The ketoreductase (KR)domain stretch occupies residues 2144–2317 (TYWLVGLTGG…AGSSVEIGCI (174 aa)). Residues 2424–2505 (KSSEEVLDIL…LLLEFVQGLI (82 aa)) enclose the Carrier 1 domain. Ser2465 carries the post-translational modification O-(pantetheine 4'-phosphoryl)serine. Residues 2512 to 2598 (KLDGSDGADA…SPTTSASMAS (87 aa)) are disordered. Low complexity predominate over residues 2556 to 2577 (PSGPASPTSPSSATASPGRSRS). Polar residues predominate over residues 2586-2598 (TPVSPTTSASMAS). The condensation stretch occupies residues 2608-3037 (TVPVSFGQSR…ATSLNRPAIY (430 aa)). The segment at 3073 to 3473 (KYATKFALRN…GGLIIEGRID (401 aa)) is adenylation. Positions 3598–3678 (AELGSDQARM…AMTDLVLSDD (81 aa)) constitute a Carrier 2 domain. Residue Ser3638 is modified to O-(pantetheine 4'-phosphoryl)serine. The segment at 3719 to 3944 (LTGATGFLGR…DFVSVENVAA (226 aa)) is reductase-like.

Belongs to the NRP synthetase family.

The protein resides in the cytoplasm. It functions in the pathway secondary metabolite biosynthesis. Functionally, hybrid PKS-NRPS synthetase; part of the gene cluster that mediates the biosynthesis of a tyrosine-derived cytochalasan acting as a fungal signal recognized by resistant rice plants and leads to avirulence in Pi33 resistant rice cultivars. The first step in the pathway is catalyzed by the hybrid PKS-NRPS ACE1, assisted by the enoyl reductase RAP1, that are responsible for fusion of the tyrosine precursor and the polyketide backbone. The polyketide synthase module (PKS) of ACE1 is responsible for the synthesis of the polyketide backbone and the downstream nonribosomal peptide synthetase (NRPS) amidates the carboxyl end of the polyketide with the tyrosine precursor. Because ACE1 lacks a designated enoylreductase (ER) domain, the required activity is provided the enoyl reductase RAP1. Reduction by the hydrolyase ORFZ, followed by dehydration and intra-molecular Diels-Alder cyclization by the Diels-Alderase ORF3 then yield the required isoindolone-fused macrocycle. A number of oxidative steps catalyzed by the tailoring enzymes identified within the cluster, including cytochrome P450 monooxygenases CYP1 to CYP4, the FAD-linked oxidoreductase OXR2 and the short-chain dehydrogenase/reductase OXR1, are further required to afford the final cytochalasans that confer avirulence and which have still to be identified. The monooxygenase CYP1 has been shown to be a site-selective C-18 hydroxylase whereas the function of CYP3 is the site-selective epoxidation of the C-6/C-7 olefin that is present in some intermediate compounds. Finally, SYN2 and RAP2 are not required for avirulence in Pi33 resistant rice cultivars. In Pyricularia oryzae (strain 70-15 / ATCC MYA-4617 / FGSC 8958) (Rice blast fungus), this protein is Polyketide synthase-nonribosomal peptide synthetase ACE1.